Reading from the N-terminus, the 367-residue chain is MSPTTPRSVEPSGLKPEQLPPSYFTWPGLLGRLGNGQELSEAQVRWAMNEIMEGNATDAQIAAFAFGIRVRGITAAELAAAAETMTSFATPVDFSDVPNCVDIVGTGGDGHHTVNISTMASFVVSAAGVPVVKHGNRAASSKCGGADMLEALGLDIERSPEDIRQDAHDTGFAFMFAKTYHPAMRFAGPVRSQLGAPTIFNLLGPMTNPAYPKFGLIGCAFKEFMPIMGGAFARQGSRVLVVRGMDGMDEISVCTPTEVVTVDAAGRTGEEVINPRNVGLDFYEDGSLVGGDAEYNADVAVRLMKGEISGAIKDAVLINAAGALTAVRGWEENGFQETLREQVQIAREALESGAALKQMEKIVGKEF.

Residues Gly105, 108-109 (GD), Thr113, 115-118 (NIST), 133-141 (KHGNRAASS), and Gly145 each bind 5-phospho-alpha-D-ribose 1-diphosphate. An anthranilate-binding site is contributed by Gly105. A Mg(2+)-binding site is contributed by Ser117. Anthranilate is bound at residue Asn136. Anthranilate is bound at residue Arg191. Mg(2+) contacts are provided by Asp249 and Glu250.

It belongs to the anthranilate phosphoribosyltransferase family. In terms of assembly, homodimer. Requires Mg(2+) as cofactor.

It carries out the reaction N-(5-phospho-beta-D-ribosyl)anthranilate + diphosphate = 5-phospho-alpha-D-ribose 1-diphosphate + anthranilate. The protein operates within amino-acid biosynthesis; L-tryptophan biosynthesis; L-tryptophan from chorismate: step 2/5. In terms of biological role, catalyzes the transfer of the phosphoribosyl group of 5-phosphorylribose-1-pyrophosphate (PRPP) to anthranilate to yield N-(5'-phosphoribosyl)-anthranilate (PRA). This Corynebacterium jeikeium (strain K411) protein is Anthranilate phosphoribosyltransferase.